A 356-amino-acid chain; its full sequence is Sporulation minus regulator 1 (356 aa).

Residues 183-199 (HPLRQLPGNPWHKFFGN) mediate DNA binding.

The protein to N.crassa mta-2.

The protein localises to the nucleus. In terms of biological role, transcriptional activator that is required for post-fertilization events. It is required for the developmental events that occur in the female organ after fertilization. This Podospora anserina (Pleurage anserina) protein is Sporulation minus regulator 1 (SMR1).